Consider the following 179-residue polypeptide: Caveolin-1 (179 aa).

An N-acetylserine modification is found at Ser2. Position 2 is a phosphoserine (Ser2). Positions 2-95 are required for homooligomerization; sequence SGGKYVDSEG…WKASFTTFTV (94 aa). The Cytoplasmic portion of the chain corresponds to 2 to 105; it reads SGGKYVDSEG…TKYWFYRLLS (104 aa). An N6-acetyllysine; alternate modification is found at Lys5. Lys5 participates in a covalent cross-link: Glycyl lysine isopeptide (Lys-Gly) (interchain with G-Cter in ubiquitin); alternate. Tyr6 bears the Phosphotyrosine mark. Ser9 is modified (phosphoserine). Tyr14 carries the post-translational modification Phosphotyrosine; by ABL1. Phosphotyrosine is present on Tyr25. Glycyl lysine isopeptide (Lys-Gly) (interchain with G-Cter in ubiquitin) cross-links involve residues Lys26 and Lys30. Ser37 is subject to Phosphoserine. Residues Lys39, Lys48, and Lys58 each participate in a glycyl lysine isopeptide (Lys-Gly) (interchain with G-Cter in ubiquitin) cross-link. The segment at 83–95 is interaction with CAVIN3; the sequence is DGIWKASFTTFTV. The helical intramembrane region spans 106 to 126; it reads ALFGIPMALIWGIYFAILSFL. The Cytoplasmic segment spans residues 127 to 179; the sequence is HIWAVVPCIKSFLIEIQCISRVYSIYVHTFCDPLFEAIGKVFSNIRINMQKEI. Positions 132 to 143 are interacts with SPRY1, SPRY2, SPRY3 and SPRY4; sequence VPCIKSFLIEIQ. S-palmitoyl cysteine attachment occurs at residues Cys134, Cys144, and Cys157. The interval 150–161 is interacts with SPRY1, SPRY2, and SPRY4; that stretch reads SIYVHTFCDPLF. Residues 168–179 are interacts with SPRY1, SPRY2, SPRY3 and SPRY4; the sequence is FSNIRINMQKEI.

Belongs to the caveolin family. Homooligomer. Interacts with GLIPR2. Interacts with NOSTRIN. Interacts with SNAP25 and STX1A. Interacts (via the N-terminus) with DPP4; the interaction is direct. Interacts with CTNNB1, CDH1 and JUP. Interacts with PACSIN2; this interaction induces membrane tubulation. Interacts with SLC7A9. Interacts with BMX and BTK. Interacts with TGFBR1. Interacts with CAVIN3 (via leucine-zipper domain) in a cholesterol-sensitive manner. Interacts with CAVIN1. Interacts with EHD2 in a cholesterol-dependent manner. Forms a ternary complex with UBXN6 and VCP; mediates CAV1 targeting to lysosomes for degradation. Interacts with ABCG1; this interaction regulates ABCG1-mediated cholesterol efflux. Interacts with NEU3; this interaction enhances NEU3 sialidase activity within caveola. Interacts (via C-terminus) with SPRY1, SPRY2 (via C-terminus), SPRY3, and SPRY4. Interacts with IGFBP5; this interaction allows trafficking of IGFBP5 from the plasma membrane to the nucleus. Post-translationally, phosphorylated at Tyr-14 by ABL1 in response to oxidative stress. In terms of processing, ubiquitinated. Undergo monoubiquitination and multi- and/or polyubiquitination. Monoubiquitination of N-terminal lysines promotes integration in a ternary complex with UBXN6 and VCP which promotes oligomeric CAV1 targeting to lysosomes for degradation. Ubiquitinated by ZNRF1; leading to degradation and modulation of the TLR4-mediated immune response.

It localises to the golgi apparatus membrane. The protein resides in the cell membrane. Its subcellular location is the membrane. It is found in the caveola. The protein localises to the membrane raft. May act as a scaffolding protein within caveolar membranes. Forms a stable heterooligomeric complex with CAV2 that targets to lipid rafts and drives caveolae formation. Mediates the recruitment of CAVIN proteins (CAVIN1/2/3/4) to the caveolae. Interacts directly with G-protein alpha subunits and can functionally regulate their activity. Involved in the costimulatory signal essential for T-cell receptor (TCR)-mediated T-cell activation. Its binding to DPP4 induces T-cell proliferation and NF-kappa-B activation in a T-cell receptor/CD3-dependent manner. Recruits CTNNB1 to caveolar membranes and may regulate CTNNB1-mediated signaling through the Wnt pathway. Negatively regulates TGFB1-mediated activation of SMAD2/3 by mediating the internalization of TGFBR1 from membrane rafts leading to its subsequent degradation. Binds 20(S)-hydroxycholesterol (20(S)-OHC). The polypeptide is Caveolin-1 (CAV1) (Eulemur macaco macaco (Black lemur)).